Here is a 427-residue protein sequence, read N- to C-terminus: Glutamate-1-semialdehyde 2,1-aminomutase (427 aa).

Lysine 265 carries the post-translational modification N6-(pyridoxal phosphate)lysine.

This sequence belongs to the class-III pyridoxal-phosphate-dependent aminotransferase family. HemL subfamily. As to quaternary structure, homodimer. It depends on pyridoxal 5'-phosphate as a cofactor.

Its subcellular location is the cytoplasm. It carries out the reaction (S)-4-amino-5-oxopentanoate = 5-aminolevulinate. The protein operates within porphyrin-containing compound metabolism; protoporphyrin-IX biosynthesis; 5-aminolevulinate from L-glutamyl-tRNA(Glu): step 2/2. This Burkholderia pseudomallei (strain 668) protein is Glutamate-1-semialdehyde 2,1-aminomutase.